The following is a 374-amino-acid chain: Occlusion-derived virus envelope protein E56 (374 aa).

The helical transmembrane segment at 155–175 (AGVGVLLAGGAYLTFSAATLV) threads the bilayer. Asparagine 183 is a glycosylation site (N-linked (GlcNAc...) asparagine; by host). Residues 319-339 (LMPLIWLIGAVLFLALVVYLI) traverse the membrane as a helical segment. A disordered region spans residues 355–374 (PPVVIVPPPATTNLNPQQQI).

Belongs to the baculoviridae E56 family.

It is found in the virion membrane. Its function is as follows. Structural protein that is specific for occlusion-derived virus (ODV) envelopes but not of budded virus (BV). The chain is Occlusion-derived virus envelope protein E56 (ODVP6E) from Orgyia pseudotsugata (Douglas-fir tussock moth).